Reading from the N-terminus, the 159-residue chain is NADH-quinone oxidoreductase subunit I (159 aa).

4Fe-4S ferredoxin-type domains lie at 51 to 80 (RRYE…IEAD) and 90 to 119 (TRYD…EGPN). 8 residues coordinate [4Fe-4S] cluster: Cys60, Cys63, Cys66, Cys70, Cys99, Cys102, Cys105, and Cys109.

It belongs to the complex I 23 kDa subunit family. In terms of assembly, NDH-1 is composed of 14 different subunits. Subunits NuoA, H, J, K, L, M, N constitute the membrane sector of the complex. Requires [4Fe-4S] cluster as cofactor.

Its subcellular location is the cell inner membrane. The catalysed reaction is a quinone + NADH + 5 H(+)(in) = a quinol + NAD(+) + 4 H(+)(out). NDH-1 shuttles electrons from NADH, via FMN and iron-sulfur (Fe-S) centers, to quinones in the respiratory chain. The immediate electron acceptor for the enzyme in this species is believed to be ubiquinone. Couples the redox reaction to proton translocation (for every two electrons transferred, four hydrogen ions are translocated across the cytoplasmic membrane), and thus conserves the redox energy in a proton gradient. This chain is NADH-quinone oxidoreductase subunit I, found in Rickettsia peacockii (strain Rustic).